We begin with the raw amino-acid sequence, 317 residues long: Beta-ketoacyl-[acyl-carrier-protein] synthase III (317 aa).

Residues C112 and H244 contribute to the active site. Residues 245–249 (QANVR) are ACP-binding. N274 is an active-site residue.

Belongs to the thiolase-like superfamily. FabH family. As to quaternary structure, homodimer.

Its subcellular location is the cytoplasm. The catalysed reaction is malonyl-[ACP] + acetyl-CoA + H(+) = 3-oxobutanoyl-[ACP] + CO2 + CoA. The protein operates within lipid metabolism; fatty acid biosynthesis. Functionally, catalyzes the condensation reaction of fatty acid synthesis by the addition to an acyl acceptor of two carbons from malonyl-ACP. Catalyzes the first condensation reaction which initiates fatty acid synthesis and may therefore play a role in governing the total rate of fatty acid production. Possesses both acetoacetyl-ACP synthase and acetyl transacylase activities. Its substrate specificity determines the biosynthesis of branched-chain and/or straight-chain of fatty acids. The protein is Beta-ketoacyl-[acyl-carrier-protein] synthase III of Rickettsia canadensis (strain McKiel).